Consider the following 95-residue polypeptide: Bombyxin C-2 (95 aa).

The N-terminal stretch at Met-1 to Ala-19 is a signal peptide. Gln-20 carries the pyrrolidone carboxylic acid modification. Intrachain disulfides connect Cys-27/Cys-76, Cys-39/Cys-89, and Cys-75/Cys-80. A propeptide spans Ser-47 to Gly-67 (c peptide like).

The protein belongs to the insulin family. In terms of assembly, heterodimer of a B chain and an A chain linked by two disulfide bonds.

It localises to the secreted. Its function is as follows. Brain peptide responsible for activation of prothoracic glands to produce ecdysone in insects. The chain is Bombyxin C-2 (BBXC2) from Bombyx mori (Silk moth).